Here is a 198-residue protein sequence, read N- to C-terminus: GTP-binding protein Di-Ras1 (198 aa).

Residues 17 to 22 (GVGKSS), 33 to 39 (RDTYIPT), 61 to 65 (DTTGS), 121 to 125 (NKCDE), Ala-151, and 151 to 152 (AK) contribute to the GTP site. The short motif at 36-44 (YIPTIEDTY) is the Effector region element. A compositionally biased stretch (basic and acidic residues) spans 178 to 192 (DGKRSGKQKRTDRVK). Residues 178–198 (DGKRSGKQKRTDRVKGKCTLM) are disordered. Residue Cys-195 is modified to Cysteine methyl ester. The S-geranylgeranyl cysteine moiety is linked to residue Cys-195. The propeptide at 196–198 (TLM) is removed in mature form.

This sequence belongs to the small GTPase superfamily. Di-Ras family. As to expression, highly expressed in heart and brain.

It localises to the cell membrane. Its function is as follows. Displays low GTPase activity and exists predominantly in the GTP-bound form. This chain is GTP-binding protein Di-Ras1 (DIRAS1), found in Homo sapiens (Human).